A 2475-amino-acid polypeptide reads, in one-letter code: Polyprotein pp220 (2475 aa).

G2 carries N-myristoyl glycine; by host lipidation. Positions 2184–2211 (RNQIIGELNAFRTQLEDTLREVNNLVQT) form a coiled coil.

It belongs to the asfivirus polyprotein pp220 family. Specific enzymatic cleavages in vivo by the viral pS273R protease yield mature proteins.

It localises to the host cytoplasm. The protein localises to the host perinuclear region. Its subcellular location is the virion. It is found in the host nucleus. In terms of biological role, essential for the core assembly. Its myristoyl moiety may function as a membrane-anchoring signal to bind the developing core shell to the inner viral envelope. The structural protein p34 is a component of the virus core shell. Its function is as follows. The structural protein p14 is a component of the virus core shell. Functionally, the structural protein p37 is a component of the virus core shell. In terms of biological role, the structural protein p150 is a component of the virus core shell. This is Polyprotein pp220 from African swine fever virus (isolate Tick/Malawi/Lil 20-1/1983) (ASFV).